The primary structure comprises 148 residues: Probable transcriptional regulator SyrB (148 aa).

The tract at residues 1–58 (MADESNTGPVAAAEAVAETQAPAGKRKSSSRRQRTAAGQVAESKTTAKPKRYSETERA) is disordered. A compositionally biased stretch (low complexity) spans 7–23 (TGPVAAAEAVAETQAPA). Over residues 24–34 (GKRKSSSRRQR) the composition is skewed to basic residues.

It belongs to the SyrB family.

In terms of biological role, responsible for the repression of SyrM activity. The protein is Probable transcriptional regulator SyrB (syrB) of Sinorhizobium fredii (strain NBRC 101917 / NGR234).